Here is a 130-residue protein sequence, read N- to C-terminus: Vascular-related unknown protein 3 (130 aa).

The disordered stretch occupies residues 45–81 (DDSSMMSDAASPMGCVEEDTASSPSNRTEGYSGMEDN).

Its function is as follows. Involved in the regulation of plant growth. This chain is Vascular-related unknown protein 3, found in Arabidopsis thaliana (Mouse-ear cress).